The following is a 29-amino-acid chain: M-poneritoxin-Ng3d (29 aa).

As to expression, expressed by the venom gland.

Its subcellular location is the secreted. Functionally, has activity against some Gram-positive bacteria and S.cerevisiae. Has a non-hemolytic activity. This Neoponera goeldii (Ponerine ant) protein is M-poneritoxin-Ng3d.